The following is an 87-amino-acid chain: CRISPR-associated endoribonuclease Cas2 (87 aa).

Asp-8 contributes to the Mg(2+) binding site.

It belongs to the CRISPR-associated endoribonuclease Cas2 protein family. Homodimer, forms a heterotetramer with a Cas1 homodimer. Mg(2+) serves as cofactor.

In terms of biological role, CRISPR (clustered regularly interspaced short palindromic repeat), is an adaptive immune system that provides protection against mobile genetic elements (viruses, transposable elements and conjugative plasmids). CRISPR clusters contain sequences complementary to antecedent mobile elements and target invading nucleic acids. CRISPR clusters are transcribed and processed into CRISPR RNA (crRNA). Functions as a ssRNA-specific endoribonuclease. Involved in the integration of spacer DNA into the CRISPR cassette. This chain is CRISPR-associated endoribonuclease Cas2, found in Dictyoglomus turgidum (strain DSM 6724 / Z-1310).